The primary structure comprises 295 residues: 4-hydroxy-tetrahydrodipicolinate synthase (295 aa).

Threonine 47 is a binding site for pyruvate. Tyrosine 135 (proton donor/acceptor) is an active-site residue. Lysine 163 (schiff-base intermediate with substrate) is an active-site residue. Residue isoleucine 206 participates in pyruvate binding.

It belongs to the DapA family. In terms of assembly, homodimer.

It is found in the cytoplasm. The catalysed reaction is L-aspartate 4-semialdehyde + pyruvate = (2S,4S)-4-hydroxy-2,3,4,5-tetrahydrodipicolinate + H2O + H(+). It functions in the pathway amino-acid biosynthesis; L-lysine biosynthesis via DAP pathway; (S)-tetrahydrodipicolinate from L-aspartate: step 3/4. Catalyzes the condensation of (S)-aspartate-beta-semialdehyde [(S)-ASA] and pyruvate to 4-hydroxy-tetrahydrodipicolinate (HTPA). The protein is 4-hydroxy-tetrahydrodipicolinate synthase of Staphylococcus saprophyticus subsp. saprophyticus (strain ATCC 15305 / DSM 20229 / NCIMB 8711 / NCTC 7292 / S-41).